Consider the following 879-residue polypeptide: Phosphoenolpyruvate carboxylase (879 aa).

Active-site residues include His-138 and Lys-545.

The protein belongs to the PEPCase type 1 family. Mg(2+) serves as cofactor.

It catalyses the reaction oxaloacetate + phosphate = phosphoenolpyruvate + hydrogencarbonate. Its function is as follows. Forms oxaloacetate, a four-carbon dicarboxylic acid source for the tricarboxylic acid cycle. The chain is Phosphoenolpyruvate carboxylase from Histophilus somni (strain 2336) (Haemophilus somnus).